A 336-amino-acid polypeptide reads, in one-letter code: tRNA N6-adenosine threonylcarbamoyltransferase (336 aa).

Fe cation is bound by residues H111 and H115. Residues 134-138 (VVSGG), D167, G180, D184, and N272 each bind substrate. A Fe cation-binding site is contributed by D300.

Belongs to the KAE1 / TsaD family. The cofactor is Fe(2+).

The protein resides in the cytoplasm. It carries out the reaction L-threonylcarbamoyladenylate + adenosine(37) in tRNA = N(6)-L-threonylcarbamoyladenosine(37) in tRNA + AMP + H(+). Its function is as follows. Required for the formation of a threonylcarbamoyl group on adenosine at position 37 (t(6)A37) in tRNAs that read codons beginning with adenine. Is involved in the transfer of the threonylcarbamoyl moiety of threonylcarbamoyl-AMP (TC-AMP) to the N6 group of A37, together with TsaE and TsaB. TsaD likely plays a direct catalytic role in this reaction. This Caldicellulosiruptor bescii (strain ATCC BAA-1888 / DSM 6725 / KCTC 15123 / Z-1320) (Anaerocellum thermophilum) protein is tRNA N6-adenosine threonylcarbamoyltransferase.